The chain runs to 234 residues: 2,3,4,5-tetrahydropyridine-2,6-dicarboxylate N-acetyltransferase (234 aa).

Belongs to the transferase hexapeptide repeat family. DapH subfamily.

It catalyses the reaction (S)-2,3,4,5-tetrahydrodipicolinate + acetyl-CoA + H2O = L-2-acetamido-6-oxoheptanedioate + CoA. It participates in amino-acid biosynthesis; L-lysine biosynthesis via DAP pathway; LL-2,6-diaminopimelate from (S)-tetrahydrodipicolinate (acetylase route): step 1/3. Functionally, catalyzes the transfer of an acetyl group from acetyl-CoA to tetrahydrodipicolinate. This Lacticaseibacillus casei (strain BL23) (Lactobacillus casei) protein is 2,3,4,5-tetrahydropyridine-2,6-dicarboxylate N-acetyltransferase.